Here is a 2118-residue protein sequence, read N- to C-terminus: Separin (2118 aa).

Residue Ser1121 is modified to Phosphoserine. Basic residues predominate over residues 1309–1318 (KCSGRGRRRI). Residues 1309–1352 (KCSGRGRRRIASVPPPLHNSSQKGLEEEGPPCTPKPPGRARQAG) form a disordered region. 2 positions are modified to phosphoserine: Ser1391 and Ser1394. Residues 1408 to 1428 (EEPKRRGTASRTRGQTRKGRS) form a disordered region. Ser1504 carries the post-translational modification Phosphoserine. The Peptidase C50 domain maps to 1941-2036 (PQNTFYVLNP…SAALAVHGNL (96 aa)). Cys2025 is a catalytic residue.

Interacts with PTTG1. Interacts with RAD21. Autocleaves. This function, which is not essential for its protease activity, is unknown. In terms of processing, phosphorylated by CDK1. There is 8 Ser/Thr phosphorylation sites. Among them, only Ser-1121 phosphorylation is the major site, which conducts to the enzyme inactivation.

The protein localises to the cytoplasm. It is found in the nucleus. It catalyses the reaction All bonds known to be hydrolyzed by this endopeptidase have arginine in P1 and an acidic residue in P4. P6 is often occupied by an acidic residue or by a hydroxy-amino-acid residue, the phosphorylation of which enhances cleavage.. Its activity is regulated as follows. Regulated by at least two independent mechanisms. First, it is inactivated via its interaction with securin/PTTG1, which probably covers its active site. The association with PTTG1 is not only inhibitory, since PTTG1 is also required for activating it, the enzyme being inactive in cells in which PTTG1 is absent. PTTG1 degradation at anaphase, liberates it and triggers RAD21 cleavage. Second, phosphorylation at Ser-1121 inactivates it. The complete phosphorylation during mitosis, is removed when cells undergo anaphase. Activation of the enzyme at the metaphase-anaphase transition probably requires the removal of both securin and inhibitory phosphate. Functionally, caspase-like protease, which plays a central role in the chromosome segregation by cleaving the SCC1/RAD21 subunit of the cohesin complex at the onset of anaphase. During most of the cell cycle, it is inactivated by different mechanisms. The chain is Separin (Espl1) from Mus musculus (Mouse).